The chain runs to 262 residues: 14-3-3-like protein A (262 aa).

Residues 240 to 262 (DNAEEGGDEIKEAASKPEGEGHS) are disordered. The segment covering 247-262 (DEIKEAASKPEGEGHS) has biased composition (basic and acidic residues).

Belongs to the 14-3-3 family.

The chain is 14-3-3-like protein A from Hordeum vulgare (Barley).